A 1301-amino-acid polypeptide reads, in one-letter code: DNA-directed RNA polymerase subunit beta (1301 aa).

This sequence belongs to the RNA polymerase beta chain family. In terms of assembly, in plastids the minimal PEP RNA polymerase catalytic core is composed of four subunits: alpha, beta, beta', and beta''. When a (nuclear-encoded) sigma factor is associated with the core the holoenzyme is formed, which can initiate transcription.

The protein resides in the plastid. It is found in the chloroplast. It carries out the reaction RNA(n) + a ribonucleoside 5'-triphosphate = RNA(n+1) + diphosphate. In terms of biological role, DNA-dependent RNA polymerase catalyzes the transcription of DNA into RNA using the four ribonucleoside triphosphates as substrates. This Chlorella vulgaris (Green alga) protein is DNA-directed RNA polymerase subunit beta.